A 233-amino-acid polypeptide reads, in one-letter code: Gamma-interferon-responsive lysosomal thiol protein (233 aa).

An N-terminal signal peptide occupies residues 1–26 (MVSSSLTKLVFFGCLLLLTFTDNLVA). The cysteines at positions 42 and 45 are disulfide-linked. N-linked (GlcNAc...) asparagine glycosylation is found at Asn80 and Asn207. Residues 200-233 (TTLPKVCNSSASMSKSPERKWKLQVSYANKATNY) constitute a propeptide, removed in mature form.

Belongs to the GILT family. As to quaternary structure, dimer; disulfide-linked. As to expression, expressed in the outer integument of seed coat.

The protein resides in the secreted. Its subcellular location is the lysosome. In terms of biological role, lysosomal thiol reductase that can reduce protein disulfide bonds. May facilitate the complete unfolding of proteins destined for lysosomal degradation. This chain is Gamma-interferon-responsive lysosomal thiol protein, found in Arabidopsis thaliana (Mouse-ear cress).